The following is a 1362-amino-acid chain: Integrator complex subunit 2 homolog (1362 aa).

Positions 1–10 (MITSNNNNKN) are enriched in low complexity. 3 disordered regions span residues 1–20 (MITS…EMKS), 629–660 (TTGT…SSPN), and 928–963 (NNNK…EEEE). The segment covering 945–955 (DDVKMKDKEKE) has biased composition (basic and acidic residues).

This sequence belongs to the Integrator subunit 2 family. In terms of assembly, component of the Integrator complex. The core complex associates with protein phosphatase 2A subunits, to form the Integrator-PP2A (INTAC) complex.

The protein resides in the nucleus. The protein localises to the cytoplasm. In terms of biological role, component of the integrator complex, a multiprotein complex that terminates RNA polymerase II (Pol II) transcription in the promoter-proximal region of genes. The integrator complex provides a quality checkpoint during transcription elongation by driving premature transcription termination of transcripts that are unfavorably configured for transcriptional elongation: the complex terminates transcription by (1) catalyzing dephosphorylation of the C-terminal domain (CTD) of Pol II subunit polr2a, (2) degrading the exiting nascent RNA transcript via endonuclease activity and (3) promoting the release of Pol II from bound DNA. The integrator complex is also involved in terminating the synthesis of non-coding Pol II transcripts, such as enhancer RNAs (eRNAs), small nuclear RNAs (snRNAs), telomerase RNAs and long non-coding RNAs (lncRNAs). The polypeptide is Integrator complex subunit 2 homolog (ints2) (Dictyostelium discoideum (Social amoeba)).